The chain runs to 991 residues: Transcription factor ROB1 (991 aa).

A DNA-binding region (zn(2)-C6 fungal-type) is located at residues 17–43; that stretch reads CTVCRTIKRKCDGNTPCSNCLKRNQEC. Disordered regions lie at residues 150 to 188, 792 to 875, and 901 to 959; these read LNQQ…ISLA, FYAQ…EDNP, and QEEG…PQLP. A compositionally biased stretch (low complexity) spans 152–168; that stretch reads QQQQQQQPSPQSLSQSS. Residues 169–187 are compositionally biased toward polar residues; sequence ASEVSTRSSPASPNSTISL. The span at 795 to 806 shows a compositional bias: low complexity; sequence QQQQQQQQQQQQ. Composition is skewed to basic and acidic residues over residues 807–817 and 825–855; these read PKHEYHDHQQE and QEEH…YPMK. Residues 907 to 931 show a composition bias toward low complexity; it reads QQQQQQQQEQVQQEQVQQEQVQQDQ.

It is found in the nucleus. Transcription factor that mediates conventional biofilm formation and plays a key role in microcolony formation under both flow and static conditions and to epithelial surfaces. Modulates infection of mammalian hosts. This Candida albicans (strain SC5314 / ATCC MYA-2876) (Yeast) protein is Transcription factor ROB1.